A 606-amino-acid polypeptide reads, in one-letter code: MNPFASLTLTTLIILTIPIMMSNSNIYKTNLYPNYVKTTVSYAFTLSLVPLLMFMHTGQEMIISNWHWMTLQTVELSLSFKMDYFSVMFIPVALFVTWSIMEFSMWYMHSDPFINRFFKYLVLFLITMMILVTANNLFQLFIGWEGVGIMSFLLIGWWHGRTDANTAALQAILYNRIGDIGFVLSMAWFLTHSNAWDLQQIFMLNNECPNMPLIGLLLAAAGKSAQFGLHPWLPSAMEGPTPVSALLHSSTMVVAGVFLLIRFYPLMETNKLVQTMTLCLGAITTLFTALCAITQNDIKKIVAFSTSSQLGLMMVTIGINQPHLAFLHICMHAFFKAMLFMCSGSIIHSLNDEQDIRKMGGLYKAMPFTTTALIIGSLALTGMPYLTGFYSKDLIIEAVNMSYTNAWALLMTLIATSLTAAYSTRIIFFAFLGKPRFPPLVLINENNPLLINSIKRLLIGSIFAGFIISNNIPPMTVPNTTMPLYMKMTALIVTIMGFMLALELNNTTYYLKFKYPSQTYKFSNMLGYYPSIMHRLPTYHNLSMSQKSASSLLDLIWLETILPKTTSFIQMKMSIMVSNQKGLIKLYFLSFLITIMISMTLFNYHE.

A run of 16 helical transmembrane segments spans residues M1 to M21, A43 to I63, V87 to Y107, P112 to V132, L137 to W157, A171 to T191, L213 to L233, T241 to I261, V273 to I293, I301 to Q321, L324 to G344, M366 to L386, W407 to F429, L457 to V477, M482 to L502, and G582 to F602.

This sequence belongs to the complex I subunit 5 family. As to quaternary structure, core subunit of respiratory chain NADH dehydrogenase (Complex I) which is composed of 45 different subunits.

The protein localises to the mitochondrion inner membrane. The enzyme catalyses a ubiquinone + NADH + 5 H(+)(in) = a ubiquinol + NAD(+) + 4 H(+)(out). Core subunit of the mitochondrial membrane respiratory chain NADH dehydrogenase (Complex I) which catalyzes electron transfer from NADH through the respiratory chain, using ubiquinone as an electron acceptor. Essential for the catalytic activity and assembly of complex I. The chain is NADH-ubiquinone oxidoreductase chain 5 (MT-ND5) from Sus scrofa (Pig).